A 212-amino-acid polypeptide reads, in one-letter code: uncharacterized protein (212 aa).

2 disordered regions span residues methionine 1 to asparagine 25 and serine 165 to glycine 212. Positions arginine 202–glycine 212 are enriched in low complexity.

This is an uncharacterized protein from Escherichia coli (strain K12).